A 184-amino-acid polypeptide reads, in one-letter code: Ribosome maturation factor RimM (184 aa).

One can recognise a PRC barrel domain in the interval 101 to 180; that stretch reads EGEFFYCDLV…KITTHNAKTL (80 aa).

Belongs to the RimM family. Binds ribosomal protein uS19.

Its subcellular location is the cytoplasm. In terms of biological role, an accessory protein needed during the final step in the assembly of 30S ribosomal subunit, possibly for assembly of the head region. Essential for efficient processing of 16S rRNA. May be needed both before and after RbfA during the maturation of 16S rRNA. It has affinity for free ribosomal 30S subunits but not for 70S ribosomes. This chain is Ribosome maturation factor RimM, found in Helicobacter pylori (strain ATCC 700392 / 26695) (Campylobacter pylori).